Reading from the N-terminus, the 509-residue chain is MNEKQRIESGQVNPSDKKSEKDYSKYFEAVYVPPSLKDAKKRGKEEVKYHNDFKISEQFRGMGEGRKFYIRTYGCQMNEHDTEVMAGIFMALGYEPTDSTEDANVILLNTCAIRENAENKVFGEIGHLKALKKDNPDLILGVCGCMSQEESVVNRILKKHPFVDLIFGTHNIHRLPELLSEAYLSKEMVIEVWSKEGDVIENLPKVRTGKIKGWVNIMYGCDKFCTYCIVPYTRGKERSRRPEDIIQEVRRLAAEGYKEITLLGQNVNAYGKDFEDMEYGLGHLMDELRKIDIPRIRFTTSHPRDFDDHLIEVLAKGGNLLDHIHLPVQSGSSDVLKLMARKYDRERYLELVAKIKKAMPNASLTTDIIVGFPNETDEQFEETLSLYREVEFDSAYTFIYSPREGTPAAKMKDNVPMRVKKERLQRLNEVVNEISAKKMKEYEGQVVEVLVEGESKNNPDILAGYTRKNKLVNFKGPKEAIGQLVNVKIHQAKTWSLDGEMVGEAIEVK.

The segment at 1 to 21 (MNEKQRIESGQVNPSDKKSEK) is disordered. An MTTase N-terminal domain is found at 66-184 (RKFYIRTYGC…LPELLSEAYL (119 aa)). Residues C75, C111, C145, C221, C225, and C228 each contribute to the [4Fe-4S] cluster site. One can recognise a Radical SAM core domain in the interval 207–437 (RTGKIKGWVN…NEVVNEISAK (231 aa)). Residues 440 to 503 (KEYEGQVVEV…TWSLDGEMVG (64 aa)) enclose the TRAM domain.

This sequence belongs to the methylthiotransferase family. MiaB subfamily. In terms of assembly, monomer. The cofactor is [4Fe-4S] cluster.

The protein resides in the cytoplasm. The enzyme catalyses N(6)-dimethylallyladenosine(37) in tRNA + (sulfur carrier)-SH + AH2 + 2 S-adenosyl-L-methionine = 2-methylsulfanyl-N(6)-dimethylallyladenosine(37) in tRNA + (sulfur carrier)-H + 5'-deoxyadenosine + L-methionine + A + S-adenosyl-L-homocysteine + 2 H(+). Catalyzes the methylthiolation of N6-(dimethylallyl)adenosine (i(6)A), leading to the formation of 2-methylthio-N6-(dimethylallyl)adenosine (ms(2)i(6)A) at position 37 in tRNAs that read codons beginning with uridine. The polypeptide is tRNA-2-methylthio-N(6)-dimethylallyladenosine synthase (Bacillus licheniformis (strain ATCC 14580 / DSM 13 / JCM 2505 / CCUG 7422 / NBRC 12200 / NCIMB 9375 / NCTC 10341 / NRRL NRS-1264 / Gibson 46)).